A 32-amino-acid polypeptide reads, in one-letter code: Cytochrome b6-f complex subunit 7 (32 aa).

The chain crosses the membrane as a helical span at residues 9-27 (AALFWVLIPLGLAGGALLL).

Belongs to the PetM family. In terms of assembly, the 4 large subunits of the cytochrome b6-f complex are cytochrome b6, subunit IV (17 kDa polypeptide, PetD), cytochrome f and the Rieske protein, while the 4 small subunits are PetG, PetL, PetM and PetN. The complex functions as a dimer.

The protein localises to the cellular thylakoid membrane. Functionally, component of the cytochrome b6-f complex, which mediates electron transfer between photosystem II (PSII) and photosystem I (PSI), cyclic electron flow around PSI, and state transitions. This chain is Cytochrome b6-f complex subunit 7, found in Synechococcus sp. (strain RCC307).